The following is a 987-amino-acid chain: Ephrin type-B receptor 4 (987 aa).

The first 15 residues, 1-15 (MELRVLLCWASLAAA), serve as a signal peptide directing secretion. Topologically, residues 16 to 539 (LEETLLNTKL…ESEGWREQLA (524 aa)) are extracellular. The 186-residue stretch at 17-202 (EETLLNTKLE…FYKKCAQLTV (186 aa)) folds into the Eph LBD domain. 2 cysteine pairs are disulfide-bonded: cysteine 61/cysteine 184 and cysteine 97/cysteine 107. 3 N-linked (GlcNAc...) asparagine glycosylation sites follow: asparagine 203, asparagine 335, and asparagine 426. Fibronectin type-III domains are found at residues 323–432 (PPSA…TDRE) and 436–529 (AVSD…TQLD). Residues 540–560 (LIAGTAVVGVVLVLVVIVVAV) traverse the membrane as a helical segment. The Cytoplasmic portion of the chain corresponds to 561-987 (LCLRKQSNGR…GGTGGPAPQY (427 aa)). The Protein kinase domain maps to 615-899 (VKIEEVIGAG…ENGGASHPLL (285 aa)). Residues 621–629 (IGAGEFGEV) and lysine 647 each bind ATP. Catalysis depends on aspartate 740, which acts as the Proton acceptor. Residues serine 769, serine 770, serine 911, and serine 943 each carry the phosphoserine modification. Positions 907–971 (SAFGSVGEWL…LASVQHMKSQ (65 aa)) constitute an SAM domain. A disordered region spans residues 965 to 987 (VQHMKSQAKPGTPGGTGGPAPQY). Threonine 976 carries the phosphothreonine modification. Positions 976 to 987 (TPGGTGGPAPQY) are enriched in gly residues. Positions 985 to 987 (PQY) match the PDZ-binding motif. Residue tyrosine 987 is modified to Phosphotyrosine.

The protein belongs to the protein kinase superfamily. Tyr protein kinase family. Ephrin receptor subfamily. As to quaternary structure, heterotetramer upon binding of the ligand. The heterotetramer is composed of an ephrin dimer and a receptor dimer. Oligomerization is probably required to induce biological responses. Interacts with RASA1; the interaction depends on EPHB4 tyrosine-phosphorylation. Post-translationally, phosphorylated; autophosphorylation is stimulated by EFNB2. In terms of tissue distribution, abundantly expressed in placenta but also detected in kidney, liver, lung, pancreas, skeletal muscle and heart. Expressed in primitive and myeloid, but not lymphoid, hematopoietic cells. Also observed in cell lines derived from liver, breast, colon, lung, melanocyte and cervix.

The protein localises to the cell membrane. The enzyme catalyses L-tyrosyl-[protein] + ATP = O-phospho-L-tyrosyl-[protein] + ADP + H(+). Functionally, receptor tyrosine kinase which binds promiscuously transmembrane ephrin-B family ligands residing on adjacent cells, leading to contact-dependent bidirectional signaling into neighboring cells. The signaling pathway downstream of the receptor is referred to as forward signaling while the signaling pathway downstream of the ephrin ligand is referred to as reverse signaling. Together with its cognate ligand/functional ligand EFNB2 it is involved in the regulation of cell adhesion and migration, and plays a central role in heart morphogenesis, angiogenesis and blood vessel remodeling and permeability. EPHB4-mediated forward signaling controls cellular repulsion and segregation from EFNB2-expressing cells. The chain is Ephrin type-B receptor 4 (EPHB4) from Homo sapiens (Human).